The following is a 333-amino-acid chain: Ornithine carbamoyltransferase (333 aa).

Carbamoyl phosphate-binding positions include 56 to 59 (STRT), Arg107, and 134 to 137 (HPTQ). L-ornithine is bound by residues Asn167, Asp231, and 235-236 (SM). Residues 273-274 (CL) and Arg318 each bind carbamoyl phosphate.

The protein belongs to the aspartate/ornithine carbamoyltransferase superfamily. OTCase family.

It is found in the cytoplasm. The catalysed reaction is carbamoyl phosphate + L-ornithine = L-citrulline + phosphate + H(+). It participates in amino-acid degradation; L-arginine degradation via ADI pathway; carbamoyl phosphate from L-arginine: step 2/2. Its function is as follows. Reversibly catalyzes the transfer of the carbamoyl group from carbamoyl phosphate (CP) to the N(epsilon) atom of ornithine (ORN) to produce L-citrulline. The polypeptide is Ornithine carbamoyltransferase (Clostridium botulinum (strain ATCC 19397 / Type A)).